Here is a 104-residue protein sequence, read N- to C-terminus: Replication restart protein PriB (104 aa).

In terms of domain architecture, SSB spans 2–101 (TNRLVLSGTV…LHAEQIELID (100 aa)). C48 and C80 are oxidised to a cystine. Residues 82 to 89 (KAKNGLSK) carry the L45 loop motif.

Belongs to the PriB family. As to quaternary structure, homodimer. Primosome assembly occurs via a 'hand-off' mechanism. PriA binds to replication forks, subsequently PriB then DnaT bind; DnaT then displaces ssDNA to generate the helicase loading substrate, which allows DnaC to load helicase DnaB onto the fork. ssDNA is displaced from the PriB-ssDNA complex by DnaT. In a PriA-PriB-replication fork structure, movement of the PriA CRR domain exposes a surface to which PriB binds and contacts ssDNA emerging from the PriA pore. Binds PriA; binding is improved in the presence of ssDNA. Weakly binds DnaT; binding is improved in the presence of ssDNA; as DnaT levels increase PriB dissociates from ssDNA. Component of the replication restart primosome, which is composed of PriA, PriB, PriC, DnaB and DnaT; DnaG primase associates transiently with this complex. Component of the preprimosomal complex composed of one monomer of PriC and DnaT, two monomers of PriA, two dimers of PriB and one hexamer of DnaB. In terms of processing, an intersubunit disulfide bond is seen in some crystals.

Its function is as follows. Involved in the restart of stalled replication forks, which reloads the replicative helicase (DnaB) on sites other than the origin of replication; the PriA-PriB pathway is the major replication restart pathway. There are several restart pathways, the PriA-PriB pathway is subdivided into 2 distinct pathways. priB and priC have redundant roles in the cell. During primosome assembly it facilitates complex formation between PriA and DnaT on DNA; stabilizes PriA on DNA, presumably by preventing or inhibiting PriA DNA translocation activity. Forms a branched DNA-PriA-PriB complex when the lagging strand is single-stranded (ss)DNA. Binds ssDNA in the presence and absence of ssDNA DNA-binding protein (SSB), does not bind branched structures. DNA binding, forming spiral filaments on ssDNA, is cooperative. Stimulates the helicase activity of PriA. The homodimer binds 12 nucleotides of ssDNA. Binds homo-pyrimidine tracts better than homo-purine tracts. Genetic interactions among priB, dam, lexA, nagC, polA, rdgB, rdgB, rep and uup link the PriA-PriB replication restart pathway to DNA double-strand break repair. This Escherichia coli (strain K12) protein is Replication restart protein PriB.